Here is a 315-residue protein sequence, read N- to C-terminus: Glycine--tRNA ligase alpha subunit (315 aa).

Belongs to the class-II aminoacyl-tRNA synthetase family. As to quaternary structure, tetramer of two alpha and two beta subunits.

The protein resides in the cytoplasm. It carries out the reaction tRNA(Gly) + glycine + ATP = glycyl-tRNA(Gly) + AMP + diphosphate. This chain is Glycine--tRNA ligase alpha subunit, found in Pseudomonas aeruginosa (strain LESB58).